The chain runs to 711 residues: MSTIVIFLAALLACSLLAGWLIKVRSRRRQLPWTNAFADAQTRKLTPEERSAVENYLESLTQVLQVPGPTGASAAPISLALNAESNNVMMLTHAITRYGISTDDPNKWRYYLDSVEVHLPPFWEQYINDENTVELIHTDSLPLVISLNGHTLQEYMQETRGYALQPVPSTQASIRGEESEQIELLNIRKETHEEYALSRPRGLREALLIVASFLMFFFCLITPDVFVPWLAGGALLLLGAGLWGLFAPPAKSSLREIHCLRGTPRRWGLFGENDQEQINNISLGIIDLVYPAHWQPYIAQDLGQQTDIDIYLDRHLVRQGRYLSLHDEVKNFPLQHWLRSTIIAAGSLLVLFMLLFWIPLDMPLKFTLSWMKGAQTIEATSVKQLADAGVRVGDTLRISGTGMCNIRTSGTWSAKTNSPFLPFDCSQIIWNDARSLPLPESELVNKATALTEAVNRQLHPKPEDESRVSASLRSAIQKSGMVLLDDFGDIVLKTADLCSAKDDCVRLKNALVNLGNSKDWDALVKRANAGKLDGVNVLLRPVSAESLDNLVATSTAPFITHETARAAQSLNSPAPGGFLIVSDEGSDFVDQPWPSASLYDYPPQEQWNAFQKLAQMLMHTPFNAEGIVTKIFTDANGTQHIGLHPIPDRSGLWRYLSTTLLLLTMLGSAIYNGVQAWRRYQRHRTRMMKIQAYYESCLNPQLITPSESLIE.

A topological domain (periplasmic) is located at residue methionine 1. The helical transmembrane segment at 2–22 (STIVIFLAALLACSLLAGWLI) threads the bilayer. Over 23 to 204 (KVRSRRRQLP…YALSRPRGLR (182 aa)) the chain is Cytoplasmic. Helical transmembrane passes span 205–225 (EALLIVASFLMFFFCLITPDV) and 226–246 (FVPWLAGGALLLLGAGLWGLF). At 247 to 339 (APPAKSSLRE…KNFPLQHWLR (93 aa)) the chain is on the cytoplasmic side. A helical transmembrane segment spans residues 340-360 (STIIAAGSLLVLFMLLFWIPL). Over 361-655 (DMPLKFTLSW…IPDRSGLWRY (295 aa)) the chain is Periplasmic. The helical transmembrane segment at 656–676 (LSTTLLLLTMLGSAIYNGVQA) threads the bilayer. The Cytoplasmic portion of the chain corresponds to 677 to 711 (WRRYQRHRTRMMKIQAYYESCLNPQLITPSESLIE).

Belongs to the IgaA family.

It localises to the cell inner membrane. In Escherichia coli O157:H7, this protein is Putative membrane protein IgaA homolog (yrfF).